Consider the following 363-residue polypeptide: 2,5-diketocamphane 1,2-monooxygenase 2 (363 aa).

Residues methionine 74 and 186–194 (TGLTKNSSS) each bind FMN.

It belongs to the bacterial luciferase oxidoreductase family. As to quaternary structure, homodimer. Likely forms a loose transient complex with a P.putida flavin reductase that provides the required FMNH(2) to the enzyme.

It carries out the reaction (1R,4R)-bornane-2,5-dione + FMNH2 + O2 = (1R,4R)-5-oxo-1,2-campholide + FMN + H2O + H(+). The protein operates within terpene metabolism; (R)-camphor degradation. Its function is as follows. Involved in the degradation and assimilation of (+)-camphor, which allows P.putida strain NCIMB 10007 to grow on this enantiomer of camphor as the sole carbon source. Catalyzes the FMNH(2)-dependent lactonization of 2,5-diketocamphane via a Baeyer-Villiger oxidation to produce the unstable lactone 5-oxo-1,2-campholide with (R,R) configuration, that presumably undergoes spontaneous hydrolysis to form 2-oxo-Delta(3)-4,5,5-trimethylcyclopentenylacetate. Is also able to convert (+)-camphor and norcamphor to the corresponding lactone in vitro. Shows no conversion of (-)-camphor, (+)-fenchone, (-)-fenchone, and (+)-nopinone. Acts on other bicyclic ketones and, to a lesser extent, on some 2- and 4-substituted monocyclic ketones. This chain is 2,5-diketocamphane 1,2-monooxygenase 2, found in Pseudomonas putida (Arthrobacter siderocapsulatus).